Consider the following 362-residue polypeptide: Variable large protein 25 (362 aa).

Residues 1 to 26 (MRKRISAIINKLNISIMMMIVVLMIG) form the signal peptide. Cys27 carries the N-palmitoyl cysteine lipid modification. Cys27 carries the S-diacylglycerol cysteine lipid modification.

This sequence belongs to the variable large protein (Vlp) family. Alpha subfamily.

It localises to the cell outer membrane. In terms of biological role, the Vlp and Vsp proteins are antigenically distinct proteins, only one vlp or vsp gene is transcriptionally active at any one time. Switching between these genes is a mechanism of host immune response evasion. The sequence is that of Variable large protein 25 from Borrelia hermsii.